We begin with the raw amino-acid sequence, 400 residues long: Forkhead box protein Q1 (400 aa).

The interval 1-112 (MKLEVFVPRA…EGARSKPYTR (112 aa)) is disordered. Residues 32–54 (LSAAGDDSLGSDGDCAANSPAAG) are compositionally biased toward low complexity. Composition is skewed to gly residues over residues 55 to 66 (SGAGDLEGGGGE) and 95 to 104 (CAGGVGGGEG). The fork-head DNA-binding region spans 115–210 (KPPYSYIALI…ADGVFRRRRK (96 aa)). Positions 213-264 (SHRTTVSASGLRPEEAPPGPAGTPQPAPAARSSPIARSPARQEERSSPASKF) are disordered. The span at 228–239 (APPGPAGTPQPA) shows a compositional bias: pro residues. The segment covering 240 to 251 (PAARSSPIARSP) has biased composition (low complexity).

In terms of tissue distribution, expressed in kidney and stomach. Expression in the outer medulla of the kidney and the transitional epithelium. Expressed in the hair follicle medulla.

The protein resides in the nucleus. Functionally, plays a role in hair follicle differentiation. This is Forkhead box protein Q1 (Foxq1) from Mus musculus (Mouse).